A 504-amino-acid chain; its full sequence is Ribose import ATP-binding protein RbsA (504 aa).

ABC transporter domains follow at residues 6–242 and 252–495; these read LELK…VGRR and VRHG…VGKT. 38 to 45 serves as a coordination point for ATP; it reads GENGAGKS.

The protein belongs to the ABC transporter superfamily. Ribose importer (TC 3.A.1.2.1) family. In terms of assembly, the complex is composed of an ATP-binding protein (RbsA), two transmembrane proteins (RbsC) and a solute-binding protein (RbsB).

It localises to the cell inner membrane. The enzyme catalyses D-ribose(out) + ATP + H2O = D-ribose(in) + ADP + phosphate + H(+). In terms of biological role, part of the ABC transporter complex RbsABC involved in ribose import. Responsible for energy coupling to the transport system. The protein is Ribose import ATP-binding protein RbsA of Photobacterium profundum (strain SS9).